A 480-amino-acid chain; its full sequence is Bifunctional pantoate ligase/cytidylate kinase (480 aa).

The pantoate--beta-alanine ligase stretch occupies residues 1–243 (MPTMGGLHQG…CGTTRLIDHV (243 aa)). 4–11 (MGGLHQGH) is a binding site for ATP. His-11 functions as the Proton donor in the catalytic mechanism. Gln-34 provides a ligand contact to (R)-pantoate. Residue Gln-34 participates in beta-alanine binding. 123–126 (GEKD) is an ATP binding site. Gln-129 lines the (R)-pantoate pocket. Residues Val-152 and 160 to 163 (LSSR) each bind ATP. The segment at 244 to 480 (FLMTRQPLVA…GEEAWPTPAG (237 aa)) is cytidylate kinase.

In the N-terminal section; belongs to the pantothenate synthetase family. It in the C-terminal section; belongs to the cytidylate kinase family. Type 1 subfamily.

It is found in the cytoplasm. It catalyses the reaction (R)-pantoate + beta-alanine + ATP = (R)-pantothenate + AMP + diphosphate + H(+). It carries out the reaction CMP + ATP = CDP + ADP. The catalysed reaction is dCMP + ATP = dCDP + ADP. It participates in cofactor biosynthesis; (R)-pantothenate biosynthesis; (R)-pantothenate from (R)-pantoate and beta-alanine: step 1/1. Its function is as follows. Catalyzes the condensation of pantoate with beta-alanine in an ATP-dependent reaction via a pantoyl-adenylate intermediate. Functionally, catalyzes the transfer of a phosphate group from ATP to either CMP or dCMP to form CDP or dCDP and ADP, respectively. The chain is Bifunctional pantoate ligase/cytidylate kinase from Synechococcus sp. (strain CC9605).